The sequence spans 257 residues: Methylthioribulose-1-phosphate dehydratase (257 aa).

Residues 1-33 (MVSSQEKMASISDIIQKDEDSGSEKTESQDKEH) form a disordered region. The segment covering 15 to 33 (IQKDEDSGSEKTESQDKEH) has biased composition (basic and acidic residues). Cys107 contacts substrate. Positions 125 and 127 each coordinate Zn(2+). The active-site Proton donor/acceptor is Glu149. His205 provides a ligand contact to Zn(2+).

Belongs to the aldolase class II family. MtnB subfamily. Zn(2+) is required as a cofactor.

Its subcellular location is the cytoplasm. It carries out the reaction 5-(methylsulfanyl)-D-ribulose 1-phosphate = 5-methylsulfanyl-2,3-dioxopentyl phosphate + H2O. It functions in the pathway amino-acid biosynthesis; L-methionine biosynthesis via salvage pathway; L-methionine from S-methyl-5-thio-alpha-D-ribose 1-phosphate: step 2/6. Catalyzes the dehydration of methylthioribulose-1-phosphate (MTRu-1-P) into 2,3-diketo-5-methylthiopentyl-1-phosphate (DK-MTP-1-P). Functions in the methionine salvage pathway. May play a role in apoptosis. In Esox lucius (Northern pike), this protein is Methylthioribulose-1-phosphate dehydratase.